We begin with the raw amino-acid sequence, 453 residues long: Cytochrome P450 monooxygenase CYP2 (453 aa).

Residues 13-29 (MVITMLHGSSTYSLLAS) traverse the membrane as a helical segment. The N-linked (GlcNAc...) asparagine glycan is linked to Asn-85. Position 397 (Cys-397) interacts with heme.

The protein belongs to the cytochrome P450 family. The cofactor is heme.

The protein resides in the membrane. It functions in the pathway secondary metabolite biosynthesis. Cytochrome P450 monooxygenase; part of the gene cluster that mediates the biosynthesis of a tyrosine-derived cytochalasan acting as a fungal signal recognized by resistant rice plants and leads to avirulence in Pi33 resistant rice cultivars. The first step in the pathway is catalyzed by the hybrid PKS-NRPS ACE1, assisted by the enoyl reductase RAP1, that are responsible for fusion of the tyrosine precursor and the polyketide backbone. The polyketide synthase module (PKS) of ACE1 is responsible for the synthesis of the polyketide backbone and the downstream nonribosomal peptide synthetase (NRPS) amidates the carboxyl end of the polyketide with the tyrosine precursor. Because ACE1 lacks a designated enoylreductase (ER) domain, the required activity is provided the enoyl reductase RAP1. Reduction by the hydrolyase ORFZ, followed by dehydration and intra-molecular Diels-Alder cyclization by the Diels-Alderase ORF3 then yield the required isoindolone-fused macrocycle. A number of oxidative steps catalyzed by the tailoring enzymes identified within the cluster, including cytochrome P450 monooxygenases CYP1 to CYP4, the FAD-linked oxidoreductase OXR2 and the short-chain dehydrogenase/reductase OXR1, are further required to afford the final cytochalasans that confer avirulence and which have still to be identified. The monooxygenase CYP1 has been shown to be a site-selective C-18 hydroxylase whereas the function of CYP3 is the site-selective epoxidation of the C-6/C-7 olefin that is present in some intermediate compounds. Finally, SYN2 and RAP2 are not required for avirulence in Pi33 resistant rice cultivars. This Pyricularia oryzae (strain 70-15 / ATCC MYA-4617 / FGSC 8958) (Rice blast fungus) protein is Cytochrome P450 monooxygenase CYP2.